A 1057-amino-acid chain; its full sequence is MASEFGILLTNQIYDQTYEKEMCDVIITAENAVRRVEVAGVHGYEWGATNHRLGLCEVENTKSIGRMIYEQIRCEGAYPIFPHYITDTLKYGKSIDRNDNQIRVDRDDERVRKIKIQPYFGEMYFSPENYITVFCKRQAISGQIEVSRSIIGRRMKYEESAEQTKGTINANKYRLLEKWRDLAYEQIEIERDNERCLTHNTDPIYQLIKKMRYGMMYPVHYMLNDRYKVVQERADMGVEKWLLQKIGRGTQRRKADDGDNDALLQLERMMSSEELERSVIESVIRFGSLYNAHAGKKTGDIPLEVLIKYCDSLTTFVHKKNREGGDNQTARDEIRRAVVKNIPSMKQENQMKVTPNIRNFLFFAYLNGFKRNNGVDIDPNNGTWSKHKAEVKKFLNEEQKKNENKPLKVLIDGAYISTDAEYGTVAHWVDWVVDIVMMTQVSRMIKEYNFIRLKKDQLISGMNKLEDGVKCYAYCLILALYDFHGRDVDGFAQGTRTAAIVETVARMFPDFRSEVSEKFGIDLAVSEESDELFVKKTMVSSFSDSGEMGYKFIFGWRKTDFKVETDYGEIVSDEVHRLYQAILDGKEWSKEVDDPEKYFVDDLYNRCPESIYVRNGVDPNNKIMIKKRGLVGESQRIFLRDLSHIGMNFKKLLLRLSSKRLHARGEHIQYHEIDVEDFKPCAIAELGLHCSTYIYQDLLVGANRGEYVKDAKELVWFDIANTNFNITRPFDRCWPSSCAEAELSLRFHLITKIFTRYRGERTSFVDIINELSEHGYVKHNFPSYKHYYLSVIQTVFEDQRAIDPLDFCAMISRNETRESTLKGFSMFTAIVKSERLIDTLFLNFLLWIVFEMENVDVSAANKRHPLLISHEKGLRLIGVDLFNGALSISTGGWIPYLERICSEEKAQRRLNADELKIKSWFLTYYMNLSLERRAEPRMSFKFEGLTTWIGSNCGGVRDYVVQALPMRKPKPGLLMIIYGDDGDARWVEWAMKNFTAVDGSLGFIYIDRHKLVNKSDFRVREMKIYNRGRLDRLILISSGHYTFGNKFLMSKLLAKTE.

The protein belongs to the orbivirus VP2 family.

Its subcellular location is the virion. Its function is as follows. The VP2 protein is one of the two proteins (with VP5) which constitute the virus particle outer capsid. It is the major target of the host immunogenic response. This Anas (ducks) protein is Outer capsid protein VP2 (Segment-2).